Here is a 269-residue protein sequence, read N- to C-terminus: GATA zinc finger domain-containing protein 1 (269 aa).

A GATA-type zinc finger spans residues 9–33 (CSVCKTTSSSMWKKGAQGEILCHHC). The interval 63–115 (ATFASTSATPPQSNGGGGGKQSKQEIHRRSARLRNTKYKSAPAAEKKVSTKGK) is disordered. Lys262 is covalently cross-linked (Glycyl lysine isopeptide (Lys-Gly) (interchain with G-Cter in SUMO2)).

As to quaternary structure, component of a chromatin complex, at least composed of KDM5A, GATAD1 and EMSY. In terms of tissue distribution, ubiquitously expressed among various tissue types. Expressed in left ventricular myocytes.

It localises to the nucleus. Functionally, component of some chromatin complex recruited to chromatin sites methylated 'Lys-4' of histone H3 (H3K4me), with a preference for trimethylated form (H3K4me3). This chain is GATA zinc finger domain-containing protein 1 (GATAD1), found in Homo sapiens (Human).